Consider the following 223-residue polypeptide: Probable Brix domain-containing ribosomal biogenesis protein (223 aa).

The Brix domain occupies 1–196 (MMLITTSHRP…IWIMEDGRRW (196 aa)).

In terms of biological role, probably involved in the biogenesis of the ribosome. The chain is Probable Brix domain-containing ribosomal biogenesis protein from Pyrococcus furiosus (strain ATCC 43587 / DSM 3638 / JCM 8422 / Vc1).